A 562-amino-acid polypeptide reads, in one-letter code: Endoglucanase E1 (562 aa).

A signal peptide spans 1-41 (MPRALRRVPGSRVMLRVGVVVAVLALVAALANLAVPRPARA). Residues 42–400 (AGGGYWHTSG…IKSSIFDPVG (359 aa)) are catalytic. An intrachain disulfide couples C75 to C161. The active-site Proton donor is E203. C209 and C212 are oxidised to a cystine. Catalysis depends on E323, which acts as the Nucleophile. The disordered stretch occupies residues 399–462 (VGASASPSSQ…PTPSPTAASG (64 aa)). Low complexity-rich tracts occupy residues 401–411 (ASASPSSQPSP) and 437–449 (PTPTLTPTATPTP). The region spanning 458-562 (TAASGARCTA…AAPTVACAAS (105 aa)) is the CBM2 domain.

It belongs to the glycosyl hydrolase 5 (cellulase A) family.

The catalysed reaction is Endohydrolysis of (1-&gt;4)-beta-D-glucosidic linkages in cellulose, lichenin and cereal beta-D-glucans.. Its function is as follows. Has a very high specific activity on carboxymethylcellulose. This is Endoglucanase E1 from Acidothermus cellulolyticus (strain ATCC 43068 / DSM 8971 / 11B).